A 267-amino-acid chain; its full sequence is DNA repair protein RecO (267 aa).

This sequence belongs to the RecO family.

Its function is as follows. Involved in DNA repair and RecF pathway recombination. This chain is DNA repair protein RecO, found in Mesoplasma florum (strain ATCC 33453 / NBRC 100688 / NCTC 11704 / L1) (Acholeplasma florum).